Reading from the N-terminus, the 90-residue chain is UPF0335 protein bsl7135 (90 aa).

It belongs to the UPF0335 family.

The chain is UPF0335 protein bsl7135 from Bradyrhizobium diazoefficiens (strain JCM 10833 / BCRC 13528 / IAM 13628 / NBRC 14792 / USDA 110).